Reading from the N-terminus, the 421-residue chain is MSDNGPQSQRSAPRITFGGPADSNDNNQDGGRSGARPKQRRPQGLPNNTASWFTALTQHGKEELRFPRGQGVPINTNSGKDDQIGYYRRATRRVRGGDGKMKELSPRWYFYYLGTGPEASLPYGANKEGIVWVATEGALNTPKDHIGTRNPNNNAAIVLQLPQGTTLPKGFYAEGSRGGSQSSSRSSSRSRGNSRNSTPGSSRGSSPARLASGGGETALALLLLDRLNQLESKVSGKGQQQPGQTVTKKSAAEASKKPRQKRTATKQYNVTQAFGRRGPEQTQGNFGDQELIRQGIDYKHWPQIAQFAPSASAFFGMSRIGMEVTPSGTWLTYHGAIKLDDKDPQFKDNVILLNKHIDAYKTFPPTEPKKDKKKKTDEAQPLPQRQKKQPTVTLLPAADMDDFSRQLQHSMSGASADSTQA.

Residues 1–11 (MSDNGPQSQRS) are compositionally biased toward polar residues. 2 disordered regions span residues 1 to 50 (MSDN…NNTA) and 63 to 82 (ELRFPRGQGVPINTNSGKDD). Positions 41 to 186 (RPQGLPNNTA…RGGSQSSSRS (146 aa)) are RNA-binding. The CoV N NTD domain occupies 48 to 175 (NTASWFTALT…TLPKGFYAEG (128 aa)). Residues arginine 92, arginine 107, and arginine 149 each coordinate RNA. Disordered stretches follow at residues 168–212 (PKGF…RLAS), 233–271 (KVSGKGQQQPGQTVTKKSAAEASKKPRQKRTATKQYNVT), and 361–421 (KTFP…STQA). Serine 176 carries the post-translational modification Phosphoserine; by host. Low complexity predominate over residues 179–212 (GSQSSSRSSSRSRGNSRNSTPGSSRGSSPARLAS). Positions 237-248 (KGQQQPGQTVTK) are enriched in polar residues. In terms of domain architecture, CoV N CTD spans 247–364 (TKKSAAEASK…KHIDAYKTFP (118 aa)). The interval 258–361 (PRQKRTATKQ…LLNKHIDAYK (104 aa)) is dimerization. Positions 367–378 (EPKKDKKKKTDE) are enriched in basic and acidic residues. A compositionally biased stretch (polar residues) spans 405-421 (RQLQHSMSGASADSTQA).

It belongs to the betacoronavirus nucleocapsid protein family. As to quaternary structure, homooligomer. Both monomeric and oligomeric forms interact with RNA. Interacts with protein M. Interacts with NSP3; this interaction serves to tether the genome to the newly translated replicase-transcriptase complex at a very early stage of infection. In terms of processing, ADP-ribosylated. The ADP-ribosylation is retained in the virion during infection. Post-translationally, phosphorylated on serine and threonine residues.

Its subcellular location is the virion. It localises to the host endoplasmic reticulum-Golgi intermediate compartment. The protein resides in the host Golgi apparatus. In terms of biological role, packages the positive strand viral genome RNA into a helical ribonucleocapsid (RNP) and plays a fundamental role during virion assembly through its interactions with the viral genome and membrane protein M. Plays an important role in enhancing the efficiency of subgenomic viral RNA transcription as well as viral replication. The polypeptide is Nucleoprotein (Rhinolophus sinicus (Chinese rufous horseshoe bat)).